Consider the following 379-residue polypeptide: Queuine tRNA-ribosyltransferase (379 aa).

Aspartate 93 serves as the catalytic Proton acceptor. Residues 93–97 (DSGGF), aspartate 147, glutamine 191, and glycine 218 contribute to the substrate site. An RNA binding region spans residues 249-255 (GVGKPED). The active-site Nucleophile is aspartate 268. The interval 273–277 (TRNAR) is RNA binding; important for wobble base 34 recognition. Zn(2+) contacts are provided by cysteine 306, cysteine 308, cysteine 311, and histidine 337.

The protein belongs to the queuine tRNA-ribosyltransferase family. Homodimer. Within each dimer, one monomer is responsible for RNA recognition and catalysis, while the other monomer binds to the replacement base PreQ1. Zn(2+) is required as a cofactor.

It catalyses the reaction 7-aminomethyl-7-carbaguanine + guanosine(34) in tRNA = 7-aminomethyl-7-carbaguanosine(34) in tRNA + guanine. It participates in tRNA modification; tRNA-queuosine biosynthesis. Functionally, catalyzes the base-exchange of a guanine (G) residue with the queuine precursor 7-aminomethyl-7-deazaguanine (PreQ1) at position 34 (anticodon wobble position) in tRNAs with GU(N) anticodons (tRNA-Asp, -Asn, -His and -Tyr). Catalysis occurs through a double-displacement mechanism. The nucleophile active site attacks the C1' of nucleotide 34 to detach the guanine base from the RNA, forming a covalent enzyme-RNA intermediate. The proton acceptor active site deprotonates the incoming PreQ1, allowing a nucleophilic attack on the C1' of the ribose to form the product. After dissociation, two additional enzymatic reactions on the tRNA convert PreQ1 to queuine (Q), resulting in the hypermodified nucleoside queuosine (7-(((4,5-cis-dihydroxy-2-cyclopenten-1-yl)amino)methyl)-7-deazaguanosine). The polypeptide is Queuine tRNA-ribosyltransferase (Mannheimia succiniciproducens (strain KCTC 0769BP / MBEL55E)).